Here is a 276-residue protein sequence, read N- to C-terminus: Probable endonuclease 4 (276 aa).

Zn(2+) is bound by residues histidine 65, histidine 105, glutamate 141, aspartate 175, histidine 178, histidine 210, aspartate 223, histidine 225, and glutamate 255.

The protein belongs to the AP endonuclease 2 family. Requires Zn(2+) as cofactor.

It catalyses the reaction Endonucleolytic cleavage to 5'-phosphooligonucleotide end-products.. In terms of biological role, endonuclease IV plays a role in DNA repair. It cleaves phosphodiester bonds at apurinic or apyrimidinic (AP) sites, generating a 3'-hydroxyl group and a 5'-terminal sugar phosphate. This chain is Probable endonuclease 4, found in Symbiobacterium thermophilum (strain DSM 24528 / JCM 14929 / IAM 14863 / T).